A 155-amino-acid polypeptide reads, in one-letter code: RING finger protein 122 (155 aa).

The helical transmembrane segment at Val-40–Ile-60 threads the bilayer. The RING-type; atypical zinc finger occupies Cys-93 to Asn-134.

Widely expressed in several tissues and cell lines.

Its subcellular location is the golgi apparatus. The protein localises to the endoplasmic reticulum. The protein resides in the membrane. Functionally, may induce necrosis and apoptosis. May play a role in cell viability. In Homo sapiens (Human), this protein is RING finger protein 122 (RNF122).